A 282-amino-acid polypeptide reads, in one-letter code: Succinate dehydrogenase [ubiquinone] iron-sulfur subunit, mitochondrial (282 aa).

The transit peptide at 1–26 directs the protein to the mitochondrion; sequence MAAVVFSLRRSGPVLRLSGALQVSRG. A 2Fe-2S ferredoxin-type domain is found at 42–135; it reads KKFAIYRWDP…VSKIYPLPHM (94 aa). Residues C95, C100, C103, and C115 each coordinate [2Fe-2S] cluster. Residues 178-208 form the 4Fe-4S ferredoxin-type domain; it reads DRDKLDGLYECILCACCSTSCPSYWWNADKY. Residues C188, C191, and C194 each contribute to the [4Fe-4S] cluster site. C198 contacts [3Fe-4S] cluster. W203 contacts a ubiquinone. Positions 245 and 251 each coordinate [3Fe-4S] cluster. C255 lines the [4Fe-4S] cluster pocket.

This sequence belongs to the succinate dehydrogenase/fumarate reductase iron-sulfur protein family. In terms of assembly, component of complex II composed of four subunits: the flavoprotein (FP) sdha, iron-sulfur protein (IP) sdhb, and a cytochrome b composed of sdhc and sdhd. [2Fe-2S] cluster serves as cofactor. Requires [3Fe-4S] cluster as cofactor. It depends on [4Fe-4S] cluster as a cofactor.

The protein resides in the mitochondrion inner membrane. It carries out the reaction a quinone + succinate = fumarate + a quinol. It catalyses the reaction (R)-malate + a quinone = enol-oxaloacetate + a quinol. The enzyme catalyses (S)-malate + a quinone = enol-oxaloacetate + a quinol. It participates in carbohydrate metabolism; tricarboxylic acid cycle; fumarate from succinate (eukaryal route): step 1/1. With respect to regulation, enol-oxaloacetate inhibits the succinate dehydrogenase activity. Iron-sulfur protein (IP) subunit of the succinate dehydrogenase complex (mitochondrial respiratory chain complex II), responsible for transferring electrons from succinate to ubiquinone (coenzyme Q). SDH also oxidizes malate to the non-canonical enol form of oxaloacetate, enol-oxaloacetate. Enol-oxaloacetate, which is a potent inhibitor of the succinate dehydrogenase activity, is further isomerized into keto-oxaloacetate. This chain is Succinate dehydrogenase [ubiquinone] iron-sulfur subunit, mitochondrial (sdhb), found in Xenopus laevis (African clawed frog).